Reading from the N-terminus, the 116-residue chain is MRHQCRVPQLGRPADQRKAMLRGLTTQLIREGRVTTTKARAKALRDEAERMITLAKEGSLASRRRVLGYVYDKQLVHALFEKAPDRYSDRKGGYTRITRTVRRRGDNAEMAIIELV.

Belongs to the bacterial ribosomal protein bL17 family. Part of the 50S ribosomal subunit. Contacts protein L32.

The polypeptide is Large ribosomal subunit protein bL17 (Synechococcus sp. (strain WH7803)).